The sequence spans 440 residues: Xaa-Pro dipeptidase (440 aa).

Mn(2+) contacts are provided by aspartate 244, aspartate 255, histidine 335, glutamate 380, and glutamate 419.

The protein belongs to the peptidase M24B family. Bacterial-type prolidase subfamily. The cofactor is Mn(2+).

The catalysed reaction is Xaa-L-Pro dipeptide + H2O = an L-alpha-amino acid + L-proline. In terms of biological role, splits dipeptides with a prolyl residue in the C-terminal position. This Shewanella halifaxensis (strain HAW-EB4) protein is Xaa-Pro dipeptidase.